Reading from the N-terminus, the 159-residue chain is MRRAVCPGSFDPITNGHLDIIARASKLYDVVHVAVMINQSKKGLFEVDERIELIRQVTAEFGNVEVESFHGLLVDFCKQRDIPAIVKGLRAVSDFDYELQMAQMNIGLSGVETLFVPTNPTYSFLSSSLVKEVAAWGGDVSHLVPPAVLEALNGRLKQD.

Serine 9 is a substrate binding site. Residues 9-10 and histidine 17 each bind ATP; that span reads SF. Residues lysine 41, leucine 73, and lysine 87 each contribute to the substrate site. Residues 88–90, glutamate 98, and 122–128 each bind ATP; these read GLR and YSFLSSS.

Belongs to the bacterial CoaD family. Homohexamer. Mg(2+) serves as cofactor.

Its subcellular location is the cytoplasm. It carries out the reaction (R)-4'-phosphopantetheine + ATP + H(+) = 3'-dephospho-CoA + diphosphate. Its pathway is cofactor biosynthesis; coenzyme A biosynthesis; CoA from (R)-pantothenate: step 4/5. Its function is as follows. Reversibly transfers an adenylyl group from ATP to 4'-phosphopantetheine, yielding dephospho-CoA (dPCoA) and pyrophosphate. This is Phosphopantetheine adenylyltransferase from Streptomyces avermitilis (strain ATCC 31267 / DSM 46492 / JCM 5070 / NBRC 14893 / NCIMB 12804 / NRRL 8165 / MA-4680).